A 322-amino-acid polypeptide reads, in one-letter code: tRNA dimethylallyltransferase (322 aa).

Residue 19–26 (GPTASGKT) coordinates ATP. 21–26 (TASGKT) serves as a coordination point for substrate. Interaction with substrate tRNA regions lie at residues 44–47 (DSAL), 168–172 (QRIQR), and 255–260 (RCVGYR).

Belongs to the IPP transferase family. As to quaternary structure, monomer. Mg(2+) serves as cofactor.

It carries out the reaction adenosine(37) in tRNA + dimethylallyl diphosphate = N(6)-dimethylallyladenosine(37) in tRNA + diphosphate. Catalyzes the transfer of a dimethylallyl group onto the adenine at position 37 in tRNAs that read codons beginning with uridine, leading to the formation of N6-(dimethylallyl)adenosine (i(6)A). The chain is tRNA dimethylallyltransferase from Cupriavidus necator (strain ATCC 17699 / DSM 428 / KCTC 22496 / NCIMB 10442 / H16 / Stanier 337) (Ralstonia eutropha).